Reading from the N-terminus, the 227-residue chain is Cytochrome c oxidase subunit 2 (227 aa).

Residues 1 to 14 (MACPVQLGFQDAAS) lie on the Mitochondrial intermembrane side of the membrane. Residues 15–45 (PIMEELTYFHDHTLMIVFLISSLVLYIISLM) form a helical membrane-spanning segment. Residues 46 to 59 (LTTELTHTSTMDAQ) lie on the Mitochondrial matrix side of the membrane. Residues 60–87 (EVETVWTILPAVILILIALPSLRILYMM) form a helical membrane-spanning segment. Topologically, residues 88 to 227 (DEITTPSLTL…HFEEWLLAML (140 aa)) are mitochondrial intermembrane. Cu cation contacts are provided by His-161, Cys-196, Glu-198, Cys-200, His-204, and Met-207. Residue Glu-198 participates in Mg(2+) binding.

Belongs to the cytochrome c oxidase subunit 2 family. In terms of assembly, component of the cytochrome c oxidase (complex IV, CIV), a multisubunit enzyme composed of 14 subunits. The complex is composed of a catalytic core of 3 subunits MT-CO1, MT-CO2 and MT-CO3, encoded in the mitochondrial DNA, and 11 supernumerary subunits COX4I, COX5A, COX5B, COX6A, COX6B, COX6C, COX7A, COX7B, COX7C, COX8 and NDUFA4, which are encoded in the nuclear genome. The complex exists as a monomer or a dimer and forms supercomplexes (SCs) in the inner mitochondrial membrane with NADH-ubiquinone oxidoreductase (complex I, CI) and ubiquinol-cytochrome c oxidoreductase (cytochrome b-c1 complex, complex III, CIII), resulting in different assemblies (supercomplex SCI(1)III(2)IV(1) and megacomplex MCI(2)III(2)IV(2)). Found in a complex with TMEM177, COA6, COX18, COX20, SCO1 and SCO2. Interacts with TMEM177 in a COX20-dependent manner. Interacts with COX20. Interacts with COX16. Cu cation serves as cofactor.

It localises to the mitochondrion inner membrane. It carries out the reaction 4 Fe(II)-[cytochrome c] + O2 + 8 H(+)(in) = 4 Fe(III)-[cytochrome c] + 2 H2O + 4 H(+)(out). In terms of biological role, component of the cytochrome c oxidase, the last enzyme in the mitochondrial electron transport chain which drives oxidative phosphorylation. The respiratory chain contains 3 multisubunit complexes succinate dehydrogenase (complex II, CII), ubiquinol-cytochrome c oxidoreductase (cytochrome b-c1 complex, complex III, CIII) and cytochrome c oxidase (complex IV, CIV), that cooperate to transfer electrons derived from NADH and succinate to molecular oxygen, creating an electrochemical gradient over the inner membrane that drives transmembrane transport and the ATP synthase. Cytochrome c oxidase is the component of the respiratory chain that catalyzes the reduction of oxygen to water. Electrons originating from reduced cytochrome c in the intermembrane space (IMS) are transferred via the dinuclear copper A center (CU(A)) of subunit 2 and heme A of subunit 1 to the active site in subunit 1, a binuclear center (BNC) formed by heme A3 and copper B (CU(B)). The BNC reduces molecular oxygen to 2 water molecules using 4 electrons from cytochrome c in the IMS and 4 protons from the mitochondrial matrix. This chain is Cytochrome c oxidase subunit 2 (MT-CO2), found in Cheirogaleus medius (Fat-tailed dwarf lemur).